A 119-amino-acid polypeptide reads, in one-letter code: Na(+)/H(+) antiporter subunit G (119 aa).

Helical transmembrane passes span 7-29 (IISI…IIRF), 44-61 (TLGV…FFLV), and 66-88 (VGKL…MMMG).

It belongs to the CPA3 antiporters (TC 2.A.63) subunit G family. In terms of assembly, forms a heterooligomeric complex that consists of seven subunits: MrpA, MrpB, MrpC, MrpD, MrpE, MrpF and MrpG.

The protein localises to the cell membrane. Functionally, mnh complex is a Na(+)Li(+)/H(+) antiporter involved in Na(+) and/or Li(+) excretion and Na(+) resistance. Na(+)/H(+) antiport consumes a transmembrane electrical potential, and is thus inferred to be electrogenic. Does not transport K(+), Ca(2+) or Mg(2+). The sequence is that of Na(+)/H(+) antiporter subunit G (mrpG) from Alkalihalophilus pseudofirmus (strain ATCC BAA-2126 / JCM 17055 / OF4) (Bacillus pseudofirmus).